Here is a 268-residue protein sequence, read N- to C-terminus: Tryptophan synthase alpha chain (268 aa).

Active-site proton acceptor residues include Glu49 and Asp60.

Belongs to the TrpA family. As to quaternary structure, tetramer of two alpha and two beta chains.

It carries out the reaction (1S,2R)-1-C-(indol-3-yl)glycerol 3-phosphate + L-serine = D-glyceraldehyde 3-phosphate + L-tryptophan + H2O. It participates in amino-acid biosynthesis; L-tryptophan biosynthesis; L-tryptophan from chorismate: step 5/5. In terms of biological role, the alpha subunit is responsible for the aldol cleavage of indoleglycerol phosphate to indole and glyceraldehyde 3-phosphate. The polypeptide is Tryptophan synthase alpha chain (Pseudomonas aeruginosa (strain LESB58)).